We begin with the raw amino-acid sequence, 155 residues long: Transcriptional repressor NrdR (155 aa).

A zinc finger lies at 3–34 (CPYCGHLEDRVVDSRETQDGQATRRRRACLSC). Positions 49–139 (PQVVKKDGRR…VYRAFRDVGE (91 aa)) constitute an ATP-cone domain.

This sequence belongs to the NrdR family. It depends on Zn(2+) as a cofactor.

Negatively regulates transcription of bacterial ribonucleotide reductase nrd genes and operons by binding to NrdR-boxes. The chain is Transcriptional repressor NrdR from Anaeromyxobacter dehalogenans (strain 2CP-1 / ATCC BAA-258).